A 746-amino-acid polypeptide reads, in one-letter code: NAD(P)H-quinone oxidoreductase subunit 5, chloroplastic (746 aa).

16 helical membrane-spanning segments follow: residues 9 to 29 (WIIP…LLLF), 40 to 60 (WTFL…YLSI), 89 to 109 (IDPL…LVLI), 125 to 145 (FAYM…SNLI), 147 to 167 (VYFF…FWFT), 185 to 205 (GDFG…SFEF), 221 to 241 (VNLL…IAKS), 258 to 278 (TPIS…FLVA), 280 to 300 (LLPL…IGII), 327 to 347 (LGYM…FHLI), 354 to 374 (ALLF…VGYS), 396 to 416 (TAFL…CFWS), 425 to 445 (LLFS…TAFY), 547 to 567 (ILFP…IGIP), 608 to 628 (FSVS…KPFY), and 723 to 743 (YLFL…FFYF).

Belongs to the complex I subunit 5 family. As to quaternary structure, NDH is composed of at least 16 different subunits, 5 of which are encoded in the nucleus.

The protein localises to the plastid. It is found in the chloroplast thylakoid membrane. The catalysed reaction is a plastoquinone + NADH + (n+1) H(+)(in) = a plastoquinol + NAD(+) + n H(+)(out). It carries out the reaction a plastoquinone + NADPH + (n+1) H(+)(in) = a plastoquinol + NADP(+) + n H(+)(out). Functionally, NDH shuttles electrons from NAD(P)H:plastoquinone, via FMN and iron-sulfur (Fe-S) centers, to quinones in the photosynthetic chain and possibly in a chloroplast respiratory chain. The immediate electron acceptor for the enzyme in this species is believed to be plastoquinone. Couples the redox reaction to proton translocation, and thus conserves the redox energy in a proton gradient. The chain is NAD(P)H-quinone oxidoreductase subunit 5, chloroplastic (ndhF) from Olimarabidopsis pumila (Dwarf rocket).